A 510-amino-acid chain; its full sequence is Inositol-3-phosphate synthase 1 (510 aa).

NAD(+) is bound by residues G70, G71, N72, N73, D143, I180, Q190, R193, T230, A231, N232, T233, G281, S282, D306, S309, N340, N341, D342, K355, G393, D394, D422, and S423.

It belongs to the myo-inositol 1-phosphate synthase family. NAD(+) serves as cofactor.

The protein localises to the cytoplasm. Its subcellular location is the cytosol. The protein resides in the nucleus. The enzyme catalyses D-glucose 6-phosphate = 1D-myo-inositol 3-phosphate. It functions in the pathway polyol metabolism; myo-inositol biosynthesis; myo-inositol from D-glucose 6-phosphate: step 1/2. Key enzyme in myo-inositol biosynthesis pathway that catalyzes the conversion of glucose 6-phosphate to 1-myo-inositol 1-phosphate in a NAD-dependent manner. May play a role in oxidative stress resistance and influences ascorbate levels. In Populus euphratica (Euphrates poplar), this protein is Inositol-3-phosphate synthase 1.